Reading from the N-terminus, the 217-residue chain is Outer-membrane lipoprotein LolB (217 aa).

The first 20 residues, 1-20, serve as a signal peptide directing secretion; the sequence is MSKALRTLALSGLVLVGLSA. Cys-21 carries N-palmitoyl cysteine lipidation. Cys-21 carries S-diacylglycerol cysteine lipidation.

Belongs to the LolB family. In terms of assembly, monomer.

The protein resides in the cell outer membrane. In terms of biological role, plays a critical role in the incorporation of lipoproteins in the outer membrane after they are released by the LolA protein. In Xanthomonas oryzae pv. oryzae (strain MAFF 311018), this protein is Outer-membrane lipoprotein LolB.